Reading from the N-terminus, the 199-residue chain is ATP-dependent Clp protease proteolytic subunit (199 aa).

Catalysis depends on Ser-102, which acts as the Nucleophile. His-127 is an active-site residue.

Belongs to the peptidase S14 family. Component of the chloroplastic Clp protease core complex.

Its subcellular location is the plastid. The protein resides in the chloroplast stroma. It carries out the reaction Hydrolysis of proteins to small peptides in the presence of ATP and magnesium. alpha-casein is the usual test substrate. In the absence of ATP, only oligopeptides shorter than five residues are hydrolyzed (such as succinyl-Leu-Tyr-|-NHMec, and Leu-Tyr-Leu-|-Tyr-Trp, in which cleavage of the -Tyr-|-Leu- and -Tyr-|-Trp bonds also occurs).. Cleaves peptides in various proteins in a process that requires ATP hydrolysis. Has a chymotrypsin-like activity. Plays a major role in the degradation of misfolded proteins. The protein is ATP-dependent Clp protease proteolytic subunit of Physcomitrium patens (Spreading-leaved earth moss).